A 295-amino-acid chain; its full sequence is Threonine/homoserine exporter RhtA (295 aa).

Residues 1 to 7 (MPGSTRK) lie on the Cytoplasmic side of the membrane. Residues 8–28 (LPVWLPILVLLIAMSSIQSGA) traverse the membrane as a helical segment. Residues 29-38 (SLAKSLFPLV) are Periplasmic-facing. One can recognise an EamA 1 domain in the interval 30–135 (LAKSLFPLVG…VLAVLGLWFL (106 aa)). The helical transmembrane segment at 39-59 (GAPGVTALRLALGTLILIAFF) threads the bilayer. The Cytoplasmic portion of the chain corresponds to 60–71 (KPWRLRFAKEQR). Residues 72–92 (LPLLFYGLSLGGMNYLFYLSI) traverse the membrane as a helical segment. Residue Q93 is a topological domain, periplasmic. The chain crosses the membrane as a helical span at residues 94–114 (TVPLGIAVALEFTGPLAVALF). The Cytoplasmic segment spans residues 115–118 (SSRR). A helical transmembrane segment spans residues 119–139 (PVDFIWVVLAVLGLWFLLPLG). At 140 to 146 (QDMSHVD) the chain is on the periplasmic side. A helical transmembrane segment spans residues 147–167 (LTGAALALGAGACWAVYILTG). The 120-residue stretch at 159–278 (CWAVYILTGQ…LCAIIAASMG (120 aa)) folds into the EamA 2 domain. Topologically, residues 168 to 175 (QRAGAEHG) are cytoplasmic. Residues 176–196 (PATVAVGSLIAAIIFVPIGAV) traverse the membrane as a helical segment. Residues 197–200 (QAGD) lie on the Periplasmic side of the membrane. A helical transmembrane segment spans residues 201 to 221 (ALWHWSILPLGLAVAVLSTAL). The Cytoplasmic segment spans residues 222 to 237 (PYSLEMIALTRLPTRT). A helical transmembrane segment spans residues 238–258 (FGTLMSMEPALAAVSGMIFLG). The Periplasmic portion of the chain corresponds to 259 to 262 (ETLT). The chain crosses the membrane as a helical span at residues 263–283 (GIQILALCAIIAASMGSTLTI). Over 284-295 (RREPQIKQVDVK) the chain is Cytoplasmic.

It belongs to the drug/metabolite transporter (DMT) superfamily. 10 TMS drug/metabolite exporter (DME) (TC 2.A.7.3) family.

Its subcellular location is the cell inner membrane. Involved in the efflux of threonine and homoserine. In Salmonella typhimurium (strain SL1344), this protein is Threonine/homoserine exporter RhtA (rhtA).